Here is a 598-residue protein sequence, read N- to C-terminus: ATP-dependent lipid A-core flippase (598 aa).

Residues 1–15 (MSQAYQPDSTKTSAK) are compositionally biased toward polar residues. The disordered stretch occupies residues 1 to 21 (MSQAYQPDSTKTSAKTPVAPT). 4 consecutive transmembrane segments (helical) span residues 44–64 (WWAILLTIIGFAINAATEIWI), 85–105 (LFPFIIVMLFFVRGVGSFLGN), 172–192 (VVALMGFLLYSNWRLTLILFV), and 269–289 (INTPAVQLLMAMAMAVVVWLA). Positions 48 to 329 (LLTIIGFAIN…LTDVNQQLQR (282 aa)) constitute an ABC transmembrane type-1 domain. The 236-residue stretch at 360 to 595 (IKLDNVSLVY…HGHYAQMYAR (236 aa)) folds into the ABC transporter domain. Residue 393–400 (GRSGAGKS) participates in ATP binding.

It belongs to the ABC transporter superfamily. Lipid exporter (TC 3.A.1.106) family. In terms of assembly, homodimer.

The protein resides in the cell inner membrane. It carries out the reaction ATP + H2O + lipid A-core oligosaccharideSide 1 = ADP + phosphate + lipid A-core oligosaccharideSide 2.. In terms of biological role, involved in lipopolysaccharide (LPS) biosynthesis. Translocates lipid A-core from the inner to the outer leaflet of the inner membrane. Transmembrane domains (TMD) form a pore in the inner membrane and the ATP-binding domain (NBD) is responsible for energy generation. The polypeptide is ATP-dependent lipid A-core flippase (Psychrobacter cryohalolentis (strain ATCC BAA-1226 / DSM 17306 / VKM B-2378 / K5)).